The primary structure comprises 117 residues: Gamma-aminobutyric acid receptor-associated protein (117 aa).

The interaction with beta-tubulin stretch occupies residues 1–22; sequence MKFVYKEEHPFEKRRSEGEKIR. The interval 36-68 is interaction with GABRG2; that stretch reads APKARIGDLDKKKYLVPSDLTVGQFYFLIRKRI. An interaction with GPHN region spans residues 36–117; it reads APKARIGDLD…AYSDESVYGL (82 aa). Positions 48-50 are interaction with LIR (LC3 nteracting Region) motif of ATG3; sequence KYL. The Phosphatidylethanolamine amidated glycine; alternate moiety is linked to residue Gly-116. A lipid anchor (Phosphatidylserine amidated glycine; alternate) is attached at Gly-116. Position 117 (Leu-117) is a propeptide, removed in mature form.

This sequence belongs to the ATG8 family. As to quaternary structure, interacts with GPHN and NSF. Interacts with ATG3, ATG7 and ATG13. Interacts with alpha-tubulin. Interacts with beta-tubulin. Interacts with GABRG2. Interacts with RB1CC1. Interacts with ULK1. Interacts with CALR. Interacts with DDX47. Interacts with TP53INP1 and TP53INP2. Interacts with TBC1D5. Interacts with TBC1D25. Directly interacts with SQSTM1. Interacts with MAPK15. Interacts with TECPR2. Interacts with PCM1. Interacts with TRIM5 and TRIM21. Interacts with MEFV. Interacts with KIF21B. Interacts with WDFY3; this interaction is required for WDFY3 recruitment to MAP1LC3B-positive p62/SQSTM1 bodies. Interacts with FLCN; interaction regulates autophagy. Interacts with UBA5. Interacts with KBTBD6 and KBTBD7; the interaction is direct and required for the ubiquitination of TIAM1. Interacts with reticulophagy regulators RETREG1, RETREG2 and RETREG3. Interacts with IRGM. Interacts with STX17. Interacts with CT55; this interaction may be important for GABARAP protein stability. Interacts with DNM2. Interacts with NCOA4 (via C-terminus). Post-translationally, the precursor molecule is cleaved by ATG4 (ATG4A, ATG4B, ATG4C or ATG4D) to expose the glycine at the C-terminus and form the cytosolic form, GABARAP-I. The processed form is then activated by APG7L/ATG7, transferred to ATG3 and conjugated to phosphatidylethanolamine (PE) phospholipid to form the membrane-bound form, GABARAP-II. During non-canonical autophagy, the processed form is conjugated to phosphatidylserine (PS) phospholipid. ATG4 proteins also mediate the delipidation of PE-conjugated forms. In addition, ATG4B and ATG4D mediate delipidation of ATG8 proteins conjugated to PS during non-canonical autophagy. ATG4B constitutes the major protein for proteolytic activation. ATG4D is the main enzyme for delipidation activity. In terms of tissue distribution, expressed in brain (at protein level). Can be found in both somatodendritic and axonal compartment of neurons.

It is found in the cytoplasmic vesicle. Its subcellular location is the autophagosome membrane. The protein localises to the endomembrane system. It localises to the cytoplasm. The protein resides in the cytoskeleton. It is found in the golgi apparatus membrane. Functionally, ubiquitin-like modifier that plays a role in intracellular transport of GABA(A) receptors and its interaction with the cytoskeleton. Involved in autophagy: while LC3s are involved in elongation of the phagophore membrane, the GABARAP/GATE-16 subfamily is essential for a later stage in autophagosome maturation. Through its interaction with the reticulophagy receptor TEX264, participates in the remodeling of subdomains of the endoplasmic reticulum into autophagosomes upon nutrient stress, which then fuse with lysosomes for endoplasmic reticulum turnover. Also required for the local activation of the CUL3(KBTBD6/7) E3 ubiquitin ligase complex, regulating ubiquitination a nd degradation of TIAM1, a guanyl-nucleotide exchange factor (GEF) that activates RAC1 and downstream signal transduction. Thereby, regulates different biological processes including the organization of the cytoskeleton, cell migration and proliferation. Involved in apoptosis. This is Gamma-aminobutyric acid receptor-associated protein from Rattus norvegicus (Rat).